Reading from the N-terminus, the 297-residue chain is 4-hydroxy-tetrahydrodipicolinate synthase (297 aa).

Thr47 contributes to the pyruvate binding site. The Proton donor/acceptor role is filled by Tyr136. Catalysis depends on Lys165, which acts as the Schiff-base intermediate with substrate. Residue Ile206 participates in pyruvate binding.

This sequence belongs to the DapA family. As to quaternary structure, homotetramer; dimer of dimers.

It is found in the cytoplasm. The catalysed reaction is L-aspartate 4-semialdehyde + pyruvate = (2S,4S)-4-hydroxy-2,3,4,5-tetrahydrodipicolinate + H2O + H(+). It participates in amino-acid biosynthesis; L-lysine biosynthesis via DAP pathway; (S)-tetrahydrodipicolinate from L-aspartate: step 3/4. Catalyzes the condensation of (S)-aspartate-beta-semialdehyde [(S)-ASA] and pyruvate to 4-hydroxy-tetrahydrodipicolinate (HTPA). This Campylobacter curvus (strain 525.92) protein is 4-hydroxy-tetrahydrodipicolinate synthase.